Here is a 256-residue protein sequence, read N- to C-terminus: Hydroxyacylglutathione hydrolase (256 aa).

The Zn(2+) site is built by His-57, His-59, Asp-61, His-62, His-115, Asp-134, and His-172.

It belongs to the metallo-beta-lactamase superfamily. Glyoxalase II family. In terms of assembly, monomer. Zn(2+) serves as cofactor.

It catalyses the reaction an S-(2-hydroxyacyl)glutathione + H2O = a 2-hydroxy carboxylate + glutathione + H(+). It functions in the pathway secondary metabolite metabolism; methylglyoxal degradation; (R)-lactate from methylglyoxal: step 2/2. Its function is as follows. Thiolesterase that catalyzes the hydrolysis of S-D-lactoyl-glutathione to form glutathione and D-lactic acid. The sequence is that of Hydroxyacylglutathione hydrolase from Jannaschia sp. (strain CCS1).